The primary structure comprises 309 residues: Porphobilinogen deaminase (309 aa).

C242 bears the S-(dipyrrolylmethanemethyl)cysteine mark.

This sequence belongs to the HMBS family. As to quaternary structure, monomer. Requires dipyrromethane as cofactor.

The catalysed reaction is 4 porphobilinogen + H2O = hydroxymethylbilane + 4 NH4(+). The protein operates within porphyrin-containing compound metabolism; protoporphyrin-IX biosynthesis; coproporphyrinogen-III from 5-aminolevulinate: step 2/4. Functionally, tetrapolymerization of the monopyrrole PBG into the hydroxymethylbilane pre-uroporphyrinogen in several discrete steps. The chain is Porphobilinogen deaminase from Hamiltonella defensa subsp. Acyrthosiphon pisum (strain 5AT).